A 236-amino-acid chain; its full sequence is 2-C-methyl-D-erythritol 4-phosphate cytidylyltransferase (236 aa).

Belongs to the IspD/TarI cytidylyltransferase family. IspD subfamily. As to quaternary structure, homodimer.

It carries out the reaction 2-C-methyl-D-erythritol 4-phosphate + CTP + H(+) = 4-CDP-2-C-methyl-D-erythritol + diphosphate. The protein operates within isoprenoid biosynthesis; isopentenyl diphosphate biosynthesis via DXP pathway; isopentenyl diphosphate from 1-deoxy-D-xylulose 5-phosphate: step 2/6. Functionally, catalyzes the formation of 4-diphosphocytidyl-2-C-methyl-D-erythritol from CTP and 2-C-methyl-D-erythritol 4-phosphate (MEP). This Enterobacter sp. (strain 638) protein is 2-C-methyl-D-erythritol 4-phosphate cytidylyltransferase.